The primary structure comprises 282 residues: GDT1-like protein 4 (282 aa).

The first 26 residues, 1–26 (MARRVSTTRLLLLLLLVAAAAAAAAA), serve as a signal peptide directing secretion. The next 6 helical transmembrane spans lie at 67–87 (AGLG…VSEI), 106–126 (TVLS…TGLG), 138–158 (TNSA…YIAW), 189–209 (IFSR…FLAE), 227–247 (AVGV…FAVV), and 259–279 (GTVA…SYFY).

The protein belongs to the GDT1 family.

It localises to the membrane. This chain is GDT1-like protein 4, found in Oryza sativa subsp. japonica (Rice).